The chain runs to 129 residues: Small ribosomal subunit protein uS11c (129 aa).

It belongs to the universal ribosomal protein uS11 family. In terms of assembly, part of the 30S ribosomal subunit.

It is found in the plastid. It localises to the chloroplast. This is Small ribosomal subunit protein uS11c from Cyanidium caldarium (Red alga).